The sequence spans 265 residues: Cytochrome c oxidase subunit 3 (265 aa).

6 consecutive transmembrane segments (helical) span residues 16–36 (PWPFFVAISANGMAVGLILWL), 40–60 (PSFLLMGMSLVCMLLSTFSWW), 83–103 (CVALFILSEVMFFFTFFWTFF), 159–179 (VGPFIGLVVTIVCGTVFFLVQ), 198–218 (VFYLLTGFHGMHVVVGTIWLM), and 241–261 (IWYWHFVDVVWVALWCLVYVW).

The protein belongs to the cytochrome c oxidase subunit 3 family. As to quaternary structure, component of the cytochrome c oxidase (complex IV, CIV), a multisubunit enzyme composed of a catalytic core of 3 subunits and several supernumerary subunits. The complex exists as a monomer or a dimer and forms supercomplexes (SCs) in the inner mitochondrial membrane with ubiquinol-cytochrome c oxidoreductase (cytochrome b-c1 complex, complex III, CIII).

Its subcellular location is the mitochondrion inner membrane. It carries out the reaction 4 Fe(II)-[cytochrome c] + O2 + 8 H(+)(in) = 4 Fe(III)-[cytochrome c] + 2 H2O + 4 H(+)(out). Component of the cytochrome c oxidase, the last enzyme in the mitochondrial electron transport chain which drives oxidative phosphorylation. The respiratory chain contains 3 multisubunit complexes succinate dehydrogenase (complex II, CII), ubiquinol-cytochrome c oxidoreductase (cytochrome b-c1 complex, complex III, CIII) and cytochrome c oxidase (complex IV, CIV), that cooperate to transfer electrons derived from NADH and succinate to molecular oxygen, creating an electrochemical gradient over the inner membrane that drives transmembrane transport and the ATP synthase. Cytochrome c oxidase is the component of the respiratory chain that catalyzes the reduction of oxygen to water. Electrons originating from reduced cytochrome c in the intermembrane space (IMS) are transferred via the dinuclear copper A center (CU(A)) of subunit 2 and heme A of subunit 1 to the active site in subunit 1, a binuclear center (BNC) formed by heme A3 and copper B (CU(B)). The BNC reduces molecular oxygen to 2 water molecules using 4 electrons from cytochrome c in the IMS and 4 protons from the mitochondrial matrix. This is Cytochrome c oxidase subunit 3 (COIII) from Mytilus edulis (Blue mussel).